Here is a 63-residue protein sequence, read N- to C-terminus: DNA-directed RNA polymerase 7 kDa subunit (63 aa).

Belongs to the poxviridae DNA-directed RNA polymerase 7 kDa subunit family. The DNA-dependent RNA polymerase used for intermediate and late genes expression consists of eight subunits 147 kDa, 133 kDa, 35 kDa, 30 kDa, 22 kDa, 19 kDa, 18 kDa and 7 kDa totalling more than 500 kDa in mass. The same holoenzyme, with the addition of the transcription-specificity factor RAP94, is used for early gene expression.

The protein resides in the virion. The catalysed reaction is RNA(n) + a ribonucleoside 5'-triphosphate = RNA(n+1) + diphosphate. Functionally, part of the DNA-dependent RNA polymerase which catalyzes the transcription of viral DNA into RNA using the four ribonucleoside triphosphates as substrates. Responsible for the transcription of early, intermediate and late genes. DNA-dependent RNA polymerase associates with the early transcription factor (ETF) thereby allowing the early genes transcription. Late transcription, and probably also intermediate transcription, require newly synthesized RNA polymerase. In Rabbit fibroma virus (strain Kasza) (RFV), this protein is DNA-directed RNA polymerase 7 kDa subunit (RPO7).